An 868-amino-acid chain; its full sequence is Probable inorganic carbon transporter subunit DabA (868 aa).

Residues Cys392, Asp394, His574, and Cys589 each coordinate Zn(2+).

This sequence belongs to the inorganic carbon transporter (TC 9.A.2) DabA family. Forms a complex with DabB. It depends on Zn(2+) as a cofactor.

It localises to the cell membrane. Its function is as follows. Part of an energy-coupled inorganic carbon pump. The protein is Probable inorganic carbon transporter subunit DabA of Bacillus cereus (strain B4264).